The chain runs to 498 residues: Protein YhjJ (498 aa).

An N-terminal signal peptide occupies residues 1–24 (MQGTKIRLLAGGLLMMATAGYVQA).

This sequence belongs to the peptidase M16 family.

The protein resides in the periplasm. This is Protein YhjJ (yhjJ) from Escherichia coli (strain K12).